The chain runs to 308 residues: Ribosomal RNA small subunit methyltransferase H (308 aa).

Residues Gly-36–His-38, Asp-55, Phe-82, Asp-103, and Gln-110 each bind S-adenosyl-L-methionine.

It belongs to the methyltransferase superfamily. RsmH family.

Its subcellular location is the cytoplasm. It catalyses the reaction cytidine(1402) in 16S rRNA + S-adenosyl-L-methionine = N(4)-methylcytidine(1402) in 16S rRNA + S-adenosyl-L-homocysteine + H(+). Specifically methylates the N4 position of cytidine in position 1402 (C1402) of 16S rRNA. The chain is Ribosomal RNA small subunit methyltransferase H from Helicobacter pylori (strain ATCC 700392 / 26695) (Campylobacter pylori).